The sequence spans 232 residues: MSACQSPIIVALDFPTREAALALADQLDPKLCRVKVGKELFTSCAAGIVETLRGKGFEVFLDLKFHDIPNTTAMAVKAAAEMGVWMVNVHCSGGLRMMAACRETLEAFSGPRPLLIGVTVLTSMEREDLAGIGLDIEPQEQVLRLAALAQKAGMDGLVCSAQEAPALKAAHPGLQLVTPGIRPAGSAQDDQRRILTPRQALDAGSDYLVIGRPISQAADPAKALAAIVAELG.

Residues Asp13, Lys35, 62–71 (DLKFHDIPNT), Thr122, Arg182, Gln191, Gly211, and Arg212 each bind substrate. Lys64 functions as the Proton donor in the catalytic mechanism.

The protein belongs to the OMP decarboxylase family. Type 1 subfamily. In terms of assembly, homodimer.

The catalysed reaction is orotidine 5'-phosphate + H(+) = UMP + CO2. It participates in pyrimidine metabolism; UMP biosynthesis via de novo pathway; UMP from orotate: step 2/2. Functionally, catalyzes the decarboxylation of orotidine 5'-monophosphate (OMP) to uridine 5'-monophosphate (UMP). In Pseudomonas aeruginosa (strain LESB58), this protein is Orotidine 5'-phosphate decarboxylase.